Consider the following 127-residue polypeptide: Histone H2B type 1-A (127 aa).

Positions 1–36 (MPEVSSKGATISKKGFKKAVVKTQKKEGKKRKRTRK) are disordered. Proline 2 carries the N-acetylproline modification. N6-acetyllysine; alternate occurs at positions 7, 13, 14, 17, 18, 22, and 25. N6-crotonyllysine; alternate is present on residues lysine 7, lysine 13, lysine 14, lysine 17, lysine 18, lysine 22, lysine 25, and lysine 36. N6-lactoyllysine; alternate is present on residues lysine 7 and lysine 13. Residue lysine 7 forms a Glycyl lysine isopeptide (Lys-Gly) (interchain with G-Cter in SUMO2); alternate linkage. N6-lactoyllysine; alternate is present on residues lysine 17, lysine 18, lysine 22, and lysine 25. Lysine 22 participates in a covalent cross-link: Glycyl lysine isopeptide (Lys-Gly) (interchain with G-Cter in SUMO2); alternate. Lysine 36 bears the N6-succinyllysine; alternate mark. Residue lysine 36 forms a Glycyl lysine isopeptide (Lys-Gly) (interchain with G-Cter in ubiquitin); alternate linkage. Serine 38 is subject to Phosphoserine. Lysine 45 carries the N6-lactoyllysine; alternate modification. Lysine 48 is modified (N6-methyllysine). Residue lysine 59 is modified to N6,N6-dimethyllysine. Residue arginine 81 is modified to Dimethylated arginine. At serine 86 the chain carries Phosphoserine. Lysine 87 carries the post-translational modification N6-acetyllysine; alternate. An N6-lactoyllysine; alternate modification is found at lysine 87. Lysine 87 bears the N6,N6,N6-trimethyllysine; alternate mark. Omega-N-methylarginine is present on residues arginine 88 and arginine 94. Lysine 110 is subject to N6-lactoyllysine; alternate. Lysine 110 is subject to N6-methyllysine. The residue at position 117 (threonine 117) is a Phosphothreonine. N6-lactoyllysine; alternate is present on residues lysine 118 and lysine 122. 2 positions are modified to N6-succinyllysine; alternate: lysine 118 and lysine 122. Lysine 118 is subject to N6-methylated lysine; alternate. Residue lysine 122 forms a Glycyl lysine isopeptide (Lys-Gly) (interchain with G-Cter in ubiquitin); alternate linkage.

Belongs to the histone H2B family. The nucleosome is a histone octamer containing two molecules each of H2A, H2B, H3 and H4 assembled in one H3-H4 heterotetramer and two H2A-H2B heterodimers. In terms of processing, monoubiquitination at Lys-36 (H2BK34Ub) by the MSL1/MSL2 dimer is required for histone H3 'Lys-4' (H3K4me) and 'Lys-79' (H3K79me) methylation and transcription activation at specific gene loci, such as HOXA9 and MEIS1 loci. Similarly, monoubiquitination at Lys-122 (H2BK120Ub) by the RNF20/40 complex gives a specific tag for epigenetic transcriptional activation and is also prerequisite for histone H3 'Lys-4' and 'Lys-79' methylation. It also functions cooperatively with the FACT dimer to stimulate elongation by RNA polymerase II. H2BK120Ub also acts as a regulator of mRNA splicing: deubiquitination by USP49 is required for efficient cotranscriptional splicing of a large set of exons. Post-translationally, crotonylation (Kcr) is specifically present in male germ cells and marks testis-specific genes in post-meiotic cells, including X-linked genes that escape sex chromosome inactivation in haploid cells. Crotonylation marks active promoters and enhancers and confers resistance to transcriptional repressors. It is also associated with post-meiotically activated genes on autosomes. Acetylated during spermatogenesis. Acetylated form is most abundant in spermatogonia compared to spermatocytes and round spermatids. In terms of processing, phosphorylated at Thr-117 in spermatogonia, spermatocytes and round spermatids. Post-translationally, methylated at Lys-118 in spermatogonia, spermatocytes and round spermatids. Lactylated in macrophages by EP300/P300 by using lactoyl-CoA directly derived from endogenous or exogenous lactate, leading to stimulates gene transcription. As to expression, mainly expressed in testis, and the corresponding protein is also present in mature sperm (at protein level). Also found in some fat cells.

The protein resides in the nucleus. Its subcellular location is the chromosome. Variant histone specifically required to direct the transformation of dissociating nucleosomes to protamine in male germ cells. Entirely replaces classical histone H2B prior nucleosome to protamine transition and probably acts as a nucleosome dissociating factor that creates a more dynamic chromatin, facilitating the large-scale exchange of histones. Core component of nucleosome. Nucleosomes wrap and compact DNA into chromatin, limiting DNA accessibility to the cellular machineries which require DNA as a template. Histones thereby play a central role in transcription regulation, DNA repair, DNA replication and chromosomal stability. DNA accessibility is regulated via a complex set of post-translational modifications of histones, also called histone code, and nucleosome remodeling. Also found in fat cells, its function and the presence of post-translational modifications specific to such cells are still unclear. The sequence is that of Histone H2B type 1-A from Homo sapiens (Human).